A 240-amino-acid polypeptide reads, in one-letter code: LexA repressor (240 aa).

A DNA-binding region (H-T-H motif) is located at residues 26–46; the sequence is FDEMKDALDLASKSGIHRLIT. Residues 78–113 form a disordered region; that stretch reads QPRRGFSPSVIEGSLGKPQPVQPPAPAKPANDENNS. Active-site for autocatalytic cleavage activity residues include S160 and K198.

The protein belongs to the peptidase S24 family. In terms of assembly, homodimer.

It carries out the reaction Hydrolysis of Ala-|-Gly bond in repressor LexA.. Functionally, represses a number of genes involved in the response to DNA damage (SOS response), including recA and lexA. In the presence of single-stranded DNA, RecA interacts with LexA causing an autocatalytic cleavage which disrupts the DNA-binding part of LexA, leading to derepression of the SOS regulon and eventually DNA repair. This Rhizobium rhizogenes (strain K84 / ATCC BAA-868) (Agrobacterium radiobacter) protein is LexA repressor.